Reading from the N-terminus, the 543-residue chain is Probable ubiquitin-conjugating enzyme E2 26 (543 aa).

Positions 1–21 (MEPDVVEIPPPPLIASGSRTR) are disordered. Residues 271-431 (NWVKKVQADW…VFLLSLKTMV (161 aa)) form the UBC core domain. C357 (glycyl thioester intermediate) is an active-site residue. The disordered stretch occupies residues 514–543 (LAEKPEPPMSNANTENQSKKKTRKRSRSSR). Over residues 532-543 (KKKTRKRSRSSR) the composition is skewed to basic residues.

It belongs to the ubiquitin-conjugating enzyme family.

The enzyme catalyses S-ubiquitinyl-[E1 ubiquitin-activating enzyme]-L-cysteine + [E2 ubiquitin-conjugating enzyme]-L-cysteine = [E1 ubiquitin-activating enzyme]-L-cysteine + S-ubiquitinyl-[E2 ubiquitin-conjugating enzyme]-L-cysteine.. It participates in protein modification; protein ubiquitination. Its function is as follows. Accepts the ubiquitin from the E1 complex and catalyzes its covalent attachment to other proteins. The polypeptide is Probable ubiquitin-conjugating enzyme E2 26 (UBC26) (Arabidopsis thaliana (Mouse-ear cress)).